The primary structure comprises 342 residues: dTDP-3,4-didehydro-2,6-dideoxy-alpha-D-glucose 3-reductase (342 aa).

Residue 19 to 25 coordinates NADP(+); sequence CADIALR. Substrate is bound at residue Arg26. Residues 44-45, Tyr65, Leu81, and His86 each bind NADP(+); that span reads SR. The Proton donor role is filled by Lys104. The NADP(+) site is built by Arg172 and Asp184. Positions 243 and 263 each coordinate substrate.

This sequence belongs to the Gfo/Idh/MocA family.

It catalyses the reaction dTDP-4-dehydro-2,6-dideoxy-alpha-D-glucose + NADP(+) = dTDP-3,4-didehydro-2,6-dideoxy-alpha-D-glucose + NADPH + H(+). Its pathway is antibiotic biosynthesis; granaticin biosynthesis. Functionally, involved in the biosynthesis of the 2,6-deoxysugar, dTDP-L-rhodinose, attached to the benzoisochromane quinone chromophore to produce the aglycone antibiotics granaticin and granaticin B. Catalyzes the reduction of the C-3 keto moiety of dTDP-3,4-diketo-2,6-dideoxy-alpha-D-glucose to yield dTDP-4-keto-2,6-dideoxy-alpha-D-glucose. NADPH is the better reductant, however NADH can also be used. In Streptomyces violaceoruber, this protein is dTDP-3,4-didehydro-2,6-dideoxy-alpha-D-glucose 3-reductase.